The chain runs to 464 residues: Protein FAM90A22 (464 aa).

Disordered stretches follow at residues 1-43 (MMAR…PRLK), 70-389 (PATL…HDGA), and 415-437 (HSPE…SEAP). Basic and acidic residues-rich tracts occupy residues 74–89 (GKKE…KPRA) and 97–114 (NKDK…DPQR). Residues 182 to 197 (SLSPLRKTSLSSSSSL) are compositionally biased toward low complexity.

This sequence belongs to the FAM90 family.

The protein is Protein FAM90A22 of Homo sapiens (Human).